The sequence spans 148 residues: Deoxyuridine 5'-triphosphate nucleotidohydrolase (148 aa).

Substrate is bound by residues Arg-68–Gly-70, Asn-81, Thr-85–Asp-87, and Lys-95.

The protein belongs to the dUTPase family. It depends on Mg(2+) as a cofactor.

The catalysed reaction is dUTP + H2O = dUMP + diphosphate + H(+). Its pathway is pyrimidine metabolism; dUMP biosynthesis; dUMP from dCTP (dUTP route): step 2/2. This enzyme is involved in nucleotide metabolism: it produces dUMP, the immediate precursor of thymidine nucleotides and it decreases the intracellular concentration of dUTP so that uracil cannot be incorporated into DNA. The chain is Deoxyuridine 5'-triphosphate nucleotidohydrolase from Rickettsia prowazekii (strain Madrid E).